The primary structure comprises 102 residues: Large ribosomal subunit protein bL21 (102 aa).

Over residues 79–91 the composition is skewed to basic residues; it reads RKDSKRKKGHRQP. The tract at residues 79–102 is disordered; sequence RKDSKRKKGHRQPYTKLTIDKINA.

The protein belongs to the bacterial ribosomal protein bL21 family. In terms of assembly, part of the 50S ribosomal subunit. Contacts protein L20.

Functionally, this protein binds to 23S rRNA in the presence of protein L20. The polypeptide is Large ribosomal subunit protein bL21 (Staphylococcus saprophyticus subsp. saprophyticus (strain ATCC 15305 / DSM 20229 / NCIMB 8711 / NCTC 7292 / S-41)).